The following is a 115-amino-acid chain: Glutaredoxin-like protein C5orf63 homolog (115 aa).

Residues Cys40 and Cys43 are joined by a disulfide bond.

This sequence belongs to the glutaredoxin family. YDR286C subfamily.

The polypeptide is Glutaredoxin-like protein C5orf63 homolog (Mus musculus (Mouse)).